Here is a 381-residue protein sequence, read N- to C-terminus: tRNA pseudouridine synthase D (381 aa).

Catalysis depends on Asp-81, which acts as the Nucleophile. One can recognise a TRUD domain in the interval 160-335 (GMPNYFGSQR…TLGSRRFFWV (176 aa)).

It belongs to the pseudouridine synthase TruD family.

The catalysed reaction is uridine(13) in tRNA = pseudouridine(13) in tRNA. Functionally, responsible for synthesis of pseudouridine from uracil-13 in transfer RNAs. This chain is tRNA pseudouridine synthase D, found in Helicobacter pylori (strain J99 / ATCC 700824) (Campylobacter pylori J99).